An 860-amino-acid chain; its full sequence is Leucine--tRNA ligase (860 aa).

The 'HIGH' region signature appears at proline 42–histidine 52. The short motif at lysine 619–serine 623 is the 'KMSKS' region element. Residue lysine 622 participates in ATP binding.

The protein belongs to the class-I aminoacyl-tRNA synthetase family.

It is found in the cytoplasm. The catalysed reaction is tRNA(Leu) + L-leucine + ATP = L-leucyl-tRNA(Leu) + AMP + diphosphate. The sequence is that of Leucine--tRNA ligase from Sodalis glossinidius (strain morsitans).